A 492-amino-acid polypeptide reads, in one-letter code: Transmembrane protein 39B (492 aa).

The interval 1-54 is disordered; it reads MGGRRGPNRTSYCRNPLCEPGSSGGSSGSHTSSASVTSVRSRTRSSSGTGLSSP. The N-linked (GlcNAc...) asparagine glycan is linked to N8. Positions 28–53 are enriched in low complexity; the sequence is GSHTSSASVTSVRSRTRSSSGTGLSS. 8 helical membrane passes run 77-97, 115-135, 153-175, 185-205, 288-308, 322-342, 421-441, and 447-467; these read SILF…VHYI, TSLN…IVLG, SLFR…GWSL, TYSF…IPFL, EVLV…VWFV, LFLL…LPAS, ILNI…YSLM, and HQTI…FKLL.

It belongs to the TMEM39 family.

It is found in the endoplasmic reticulum membrane. In terms of biological role, may protect the cells against DNA damage caused by exposure to the cold-warming stress and facilitates tissue damage repair during the recovery phase. In Homo sapiens (Human), this protein is Transmembrane protein 39B.